The primary structure comprises 232 residues: 5'-methylthioadenosine/S-adenosylhomocysteine nucleosidase (232 aa).

E12 functions as the Proton acceptor in the catalytic mechanism. Substrate contacts are provided by residues G78, I152, and 173–174; that span reads ME. The active-site Proton donor is the D197.

The protein belongs to the PNP/UDP phosphorylase family. MtnN subfamily. Homodimer.

The enzyme catalyses S-adenosyl-L-homocysteine + H2O = S-(5-deoxy-D-ribos-5-yl)-L-homocysteine + adenine. The catalysed reaction is S-methyl-5'-thioadenosine + H2O = 5-(methylsulfanyl)-D-ribose + adenine. It catalyses the reaction 5'-deoxyadenosine + H2O = 5-deoxy-D-ribose + adenine. The protein operates within amino-acid biosynthesis; L-methionine biosynthesis via salvage pathway; S-methyl-5-thio-alpha-D-ribose 1-phosphate from S-methyl-5'-thioadenosine (hydrolase route): step 1/2. Catalyzes the irreversible cleavage of the glycosidic bond in both 5'-methylthioadenosine (MTA) and S-adenosylhomocysteine (SAH/AdoHcy) to adenine and the corresponding thioribose, 5'-methylthioribose and S-ribosylhomocysteine, respectively. Also cleaves 5'-deoxyadenosine, a toxic by-product of radical S-adenosylmethionine (SAM) enzymes, into 5-deoxyribose and adenine. Thus, is required for in vivo function of the radical SAM enzymes biotin synthase and lipoic acid synthase, that are inhibited by 5'-deoxyadenosine accumulation. This Citrobacter koseri (strain ATCC BAA-895 / CDC 4225-83 / SGSC4696) protein is 5'-methylthioadenosine/S-adenosylhomocysteine nucleosidase.